We begin with the raw amino-acid sequence, 371 residues long: Antibiotic efflux pump periplasmic linker protein ArpA (371 aa).

Residues 1-22 (MQFKPAVTALVSAVALATLLSG) form the signal peptide. Cys23 is lipidated: N-palmitoyl cysteine. A lipid anchor (S-diacylglycerol cysteine) is attached at Cys23. Residues 115-155 (LAERYKQLIDEQAVSKQEYDDANAKRLQAEASLKSAQIDLR) adopt a coiled-coil conformation.

This sequence belongs to the membrane fusion protein (MFP) (TC 8.A.1) family.

Its subcellular location is the cell inner membrane. In terms of biological role, the periplasmic linker protein component of an antibiotic efflux pump. Confers resistance to numerous structurally unrelated antibiotics such as carbenicillin, chloramphenicol, erythromycin, novobiocin, streptomycin and tetracycline. Is not involved in organic solvent efflux. The polypeptide is Antibiotic efflux pump periplasmic linker protein ArpA (arpA) (Pseudomonas putida (Arthrobacter siderocapsulatus)).